We begin with the raw amino-acid sequence, 260 residues long: Thiazole synthase (260 aa).

Catalysis depends on Lys101, which acts as the Schiff-base intermediate with DXP. 1-deoxy-D-xylulose 5-phosphate contacts are provided by residues Gly162, Ala188–Gly189, and Asn210–Thr211.

It belongs to the ThiG family. As to quaternary structure, homotetramer. Forms heterodimers with either ThiH or ThiS.

Its subcellular location is the cytoplasm. It carries out the reaction [ThiS sulfur-carrier protein]-C-terminal-Gly-aminoethanethioate + 2-iminoacetate + 1-deoxy-D-xylulose 5-phosphate = [ThiS sulfur-carrier protein]-C-terminal Gly-Gly + 2-[(2R,5Z)-2-carboxy-4-methylthiazol-5(2H)-ylidene]ethyl phosphate + 2 H2O + H(+). It functions in the pathway cofactor biosynthesis; thiamine diphosphate biosynthesis. Catalyzes the rearrangement of 1-deoxy-D-xylulose 5-phosphate (DXP) to produce the thiazole phosphate moiety of thiamine. Sulfur is provided by the thiocarboxylate moiety of the carrier protein ThiS. In vitro, sulfur can be provided by H(2)S. This is Thiazole synthase from Acidithiobacillus ferrooxidans (strain ATCC 23270 / DSM 14882 / CIP 104768 / NCIMB 8455) (Ferrobacillus ferrooxidans (strain ATCC 23270)).